The following is a 449-amino-acid chain: Ribosomal protein uS12 methylthiotransferase RimO (449 aa).

In terms of domain architecture, MTTase N-terminal spans 5–116 (PTIAISHLGC…IVDVVQRVEN (112 aa)). Residues cysteine 14, cysteine 50, cysteine 79, cysteine 154, cysteine 158, and cysteine 161 each coordinate [4Fe-4S] cluster. The 230-residue stretch at 140 to 369 (TTTEGVAYLR…MEVQQPISIK (230 aa)) folds into the Radical SAM core domain. The TRAM domain occupies 372–438 (QNCIGQTVPV…VYDLYGKTNL (67 aa)).

It belongs to the methylthiotransferase family. RimO subfamily. It depends on [4Fe-4S] cluster as a cofactor.

It localises to the cytoplasm. It catalyses the reaction L-aspartate(89)-[ribosomal protein uS12]-hydrogen + (sulfur carrier)-SH + AH2 + 2 S-adenosyl-L-methionine = 3-methylsulfanyl-L-aspartate(89)-[ribosomal protein uS12]-hydrogen + (sulfur carrier)-H + 5'-deoxyadenosine + L-methionine + A + S-adenosyl-L-homocysteine + 2 H(+). In terms of biological role, catalyzes the methylthiolation of an aspartic acid residue of ribosomal protein uS12. This Rippkaea orientalis (strain PCC 8801 / RF-1) (Cyanothece sp. (strain PCC 8801)) protein is Ribosomal protein uS12 methylthiotransferase RimO.